A 633-amino-acid polypeptide reads, in one-letter code: Threonine--tRNA ligase (633 aa).

Residues 1–61 (MINVYFSDNS…TEDCKFEVIT (61 aa)) form the TGS domain. Positions 242–533 (DHRKIGKELE…LIEHHSGKLP (292 aa)) are catalytic. The Zn(2+) site is built by C333, H384, and H510.

The protein belongs to the class-II aminoacyl-tRNA synthetase family. As to quaternary structure, homodimer. The cofactor is Zn(2+).

It localises to the cytoplasm. The catalysed reaction is tRNA(Thr) + L-threonine + ATP = L-threonyl-tRNA(Thr) + AMP + diphosphate + H(+). Its function is as follows. Catalyzes the attachment of threonine to tRNA(Thr) in a two-step reaction: L-threonine is first activated by ATP to form Thr-AMP and then transferred to the acceptor end of tRNA(Thr). Also edits incorrectly charged L-seryl-tRNA(Thr). The sequence is that of Threonine--tRNA ligase from Ehrlichia ruminantium (strain Welgevonden).